The primary structure comprises 241 residues: Small ribosomal subunit protein uS3 (241 aa).

Positions 39–108 (IREGVLKLLK…NLKVEVKVIE (70 aa)) constitute a KH type-2 domain. The segment at 215–241 (SQRVSEKAPMNNDRRFNNKNNNRGGRK) is disordered. A compositionally biased stretch (low complexity) spans 232-241 (NKNNNRGGRK).

Belongs to the universal ribosomal protein uS3 family. As to quaternary structure, part of the 30S ribosomal subunit. Forms a tight complex with proteins S10 and S14.

Its function is as follows. Binds the lower part of the 30S subunit head. Binds mRNA in the 70S ribosome, positioning it for translation. The chain is Small ribosomal subunit protein uS3 from Mesoplasma florum (Acholeplasma florum).